A 454-amino-acid chain; its full sequence is Protein odr-4 homolog (454 aa).

The next 2 membrane-spanning stretches (helical) occupy residues 82–102 (MLPGGLLVLGVFIITTLELAN) and 432–452 (IGVIAAFTVAVLAAGISFHYF).

The protein belongs to the ODR-4 family. In terms of tissue distribution, ubiquitously expressed.

It localises to the membrane. In terms of biological role, may play a role in the trafficking of a subset of G-protein coupled receptors. This Homo sapiens (Human) protein is Protein odr-4 homolog.